Here is a 101-residue protein sequence, read N- to C-terminus: Small ribosomal subunit protein uS14 (101 aa).

It belongs to the universal ribosomal protein uS14 family. Part of the 30S ribosomal subunit. Contacts proteins S3 and S10.

Binds 16S rRNA, required for the assembly of 30S particles and may also be responsible for determining the conformation of the 16S rRNA at the A site. This chain is Small ribosomal subunit protein uS14, found in Pseudoalteromonas translucida (strain TAC 125).